We begin with the raw amino-acid sequence, 188 residues long: Photosystem I assembly protein Ycf4 (188 aa).

2 helical membrane passes run 26–48 and 68–90; these read MLWASVSAIGGIGFLLAGLSSYF and AALTFYGVAGTLLSAYLWFVFFL.

The protein belongs to the Ycf4 family.

The protein resides in the cellular thylakoid membrane. In terms of biological role, seems to be required for the assembly of the photosystem I complex. In Picosynechococcus sp. (strain ATCC 27264 / PCC 7002 / PR-6) (Agmenellum quadruplicatum), this protein is Photosystem I assembly protein Ycf4.